The primary structure comprises 946 residues: Leucine--tRNA ligase (946 aa).

Positions 43–53 (PYPNGTIHIGH) match the 'HIGH' region motif. The short motif at 638–642 (KMSKS) is the 'KMSKS' region element. Lys-641 lines the ATP pocket.

The protein belongs to the class-I aminoacyl-tRNA synthetase family.

The protein resides in the cytoplasm. The enzyme catalyses tRNA(Leu) + L-leucine + ATP = L-leucyl-tRNA(Leu) + AMP + diphosphate. The sequence is that of Leucine--tRNA ligase from Pyrobaculum calidifontis (strain DSM 21063 / JCM 11548 / VA1).